Reading from the N-terminus, the 453-residue chain is DNA repair protein RadA (453 aa).

Residues 11-28 (CNQCGATAPKWLGQCPGC) form a C4-type zinc finger. ATP is bound at residue 93-100 (GDPGIGKS). Residues 250–254 (KNRFG) carry the RadA KNRFG motif motif. Residues 349–453 (DVFLSITGGL…TIKDAIRLLL (105 aa)) are lon-protease-like.

This sequence belongs to the RecA family. RadA subfamily.

DNA-dependent ATPase involved in processing of recombination intermediates, plays a role in repairing DNA breaks. Stimulates the branch migration of RecA-mediated strand transfer reactions, allowing the 3' invading strand to extend heteroduplex DNA faster. Binds ssDNA in the presence of ADP but not other nucleotides, has ATPase activity that is stimulated by ssDNA and various branched DNA structures, but inhibited by SSB. Does not have RecA's homology-searching function. In Chlamydia pneumoniae (Chlamydophila pneumoniae), this protein is DNA repair protein RadA.